A 603-amino-acid chain; its full sequence is D-3-phosphoglycerate dehydrogenase 1, chloroplastic (603 aa).

A chloroplast-targeting transit peptide spans 1-54 (MSATAAASSSIAVATNSLRNVTLSSRSPLPSAISVAFPSRGRNTLQRRLVLVSC). NAD(+) is bound by residues 210-211 (KV), aspartate 230, 289-291 (VAR), and aspartate 315. Arginine 291 is an active-site residue. Glutamate 320 is a catalytic residue. Histidine 339 serves as the catalytic Proton donor. 339-342 (HLGA) is a binding site for NAD(+). Positions 531–603 (IILCRQVDQP…AVEEFVFLKL (73 aa)) constitute an ACT domain.

Belongs to the D-isomer specific 2-hydroxyacid dehydrogenase family. As to expression, ubiquitous, but highly expressed in roots. Expressed in vasculature, root and shoot meristems, distal part of cotyledons and leaves, anther, stigma and pollen grains. Detected at the tip of the cotyledons in late embryos.

The protein localises to the plastid. The protein resides in the chloroplast. The enzyme catalyses (2R)-3-phosphoglycerate + NAD(+) = 3-phosphooxypyruvate + NADH + H(+). Its pathway is amino-acid biosynthesis; L-serine biosynthesis; L-serine from 3-phospho-D-glycerate: step 1/3. With respect to regulation, partially inhibited by 5 mM serine. Its function is as follows. Involved in the plastidial phosphorylated pathway of serine biosynthesis (PPSB). Required for mature pollen development. This chain is D-3-phosphoglycerate dehydrogenase 1, chloroplastic (PGDH1), found in Arabidopsis thaliana (Mouse-ear cress).